The chain runs to 194 residues: 7-methyl-GTP pyrophosphatase (194 aa).

The active-site Proton acceptor is D71.

This sequence belongs to the Maf family. YceF subfamily. Requires a divalent metal cation as cofactor.

It localises to the cytoplasm. The enzyme catalyses N(7)-methyl-GTP + H2O = N(7)-methyl-GMP + diphosphate + H(+). Its function is as follows. Nucleoside triphosphate pyrophosphatase that hydrolyzes 7-methyl-GTP (m(7)GTP). May have a dual role in cell division arrest and in preventing the incorporation of modified nucleotides into cellular nucleic acids. The polypeptide is 7-methyl-GTP pyrophosphatase (Aromatoleum aromaticum (strain DSM 19018 / LMG 30748 / EbN1) (Azoarcus sp. (strain EbN1))).